Consider the following 695-residue polypeptide: F-box only protein 34 (695 aa).

Disordered stretches follow at residues 239-275 (GQSR…QGEP), 316-373 (LTNG…CPSL), and 472-524 (GQDQ…PGGS). The F-box domain maps to 556–608 (QQYMACLPHHIIVKIFRLLPTLSLAILKCTCRYFKSIIEYYNIRPADSRWVRD).

In terms of assembly, directly interacts with SKP1 and CUL1.

Its function is as follows. Substrate-recognition component of the SCF (SKP1-CUL1-F-box protein)-type E3 ubiquitin ligase complex. The sequence is that of F-box only protein 34 (Fbxo34) from Mus musculus (Mouse).